Consider the following 206-residue polypeptide: Small ribosomal subunit protein uS4 (206 aa).

In terms of domain architecture, S4 RNA-binding spans 96–158 (GRLDNVVYRM…AKQQSRIKAA (63 aa)).

It belongs to the universal ribosomal protein uS4 family. In terms of assembly, part of the 30S ribosomal subunit. Contacts protein S5. The interaction surface between S4 and S5 is involved in control of translational fidelity.

Functionally, one of the primary rRNA binding proteins, it binds directly to 16S rRNA where it nucleates assembly of the body of the 30S subunit. With S5 and S12 plays an important role in translational accuracy. This Aliivibrio fischeri (strain ATCC 700601 / ES114) (Vibrio fischeri) protein is Small ribosomal subunit protein uS4.